The primary structure comprises 151 residues: Protein SprT-like (151 aa).

Residues 6–148 (LQALVERISL…FCRGKLKKIK (143 aa)) form the SprT-like domain. Position 67 (His-67) interacts with Zn(2+). Residue Glu-68 is part of the active site. Residue His-71 coordinates Zn(2+).

Belongs to the SprT family. It depends on Zn(2+) as a cofactor.

The protein localises to the cytoplasm. This Anoxybacillus flavithermus (strain DSM 21510 / WK1) protein is Protein SprT-like.